Here is a 343-residue protein sequence, read N- to C-terminus: 7-epi-alpha-eudesmol synthase ((2E,6E)-farnesyl diphosphate cyclizing) (343 aa).

Positions 80 and 84 each coordinate Mg(2+). A DDXXD motif motif is present at residues 80 to 84 (DDQFD). Residue R177 participates in substrate binding. Mg(2+)-binding residues include N223 and S227. A substrate-binding site is contributed by R230. E231 is a binding site for Mg(2+). 317–318 (RY) is a binding site for substrate.

The protein belongs to the terpene synthase family. Requires Mg(2+) as cofactor.

The catalysed reaction is (2E,6E)-farnesyl diphosphate + H2O = 7-epi-alpha-eudesmol + diphosphate. It participates in secondary metabolite biosynthesis; terpenoid biosynthesis. Its function is as follows. Catalyzes the conversion of (2E,6E)-farnesyl diphosphate (FPP) to yield the bicyclic sesquiterpenol 7-epi-alpha-eudesmol via a 1,10-cyclization, which requires the abstraction of the pyrophosphate from FPP to yield the (E,E)-germacradienyl cation. The only accepted substrate is (2E,6E)-farnesyl diphosphate (FPP). The chain is 7-epi-alpha-eudesmol synthase ((2E,6E)-farnesyl diphosphate cyclizing) from Streptomyces viridochromogenes (strain DSM 40736 / JCM 4977 / BCRC 1201 / Tue 494).